The following is a 590-amino-acid chain: Leucine-rich repeat transmembrane neuronal protein 4 (590 aa).

A signal peptide spans 1-30 (MGFRLITQLKGMSVLLVLFPTLLLVMLTGA). Positions 31–59 (QRACPKNCRCDGKIVYCESHAFADIPENI) constitute an LRRNT domain. Residues 31–424 (QRACPKNCRC…HEYEHVSFHK (394 aa)) are Extracellular-facing. N-linked (GlcNAc...) asparagine glycosylation occurs at Asn58. 10 LRR repeats span residues 60–83 (SGGS…QFAG), 84–107 (LNQL…AFQG), 108–131 (IRRL…TFHP), 132–155 (VPNL…QFKG), 157–179 (RKLI…VFQD), 180–203 (CRNL…AFAG), 205–227 (LKLK…HFPR), 228–251 (LFNL…LTWT), 252–275 (WSSL…TFKC), and 276–299 (LPNL…TVNA). A glycan (N-linked (GlcNAc...) asparagine) is linked at Asn126. A glycan (N-linked (GlcNAc...) asparagine) is linked at Asn291. Positions 311–362 (NMWECSRSICPLFYWLKNFKGNKESTMICAGPKHIQGEKVSDAVETYNICSD) constitute an LRRCT domain. A helical membrane pass occupies residues 425–445 (IIAGSVALFLSVAMILLVIYV). Topologically, residues 446 to 590 (SWKRYPASMK…PAIYLERITN (145 aa)) are cytoplasmic.

The protein belongs to the LRRTM family. Peripherally associated with AMPAR complex. AMPAR complex consists of an inner core made of 4 pore-forming GluA/GRIA proteins (GRIA1, GRIA2, GRIA3 and GRIA4) and 4 major auxiliary subunits arranged in a twofold symmetry. One of the two pairs of distinct binding sites is occupied either by CNIH2, CNIH3 or CACNG2, CACNG3. The other harbors CACNG2, CACNG3, CACNG4, CACNG8 or GSG1L. This inner core of AMPAR complex is complemented by outer core constituents binding directly to the GluA/GRIA proteins at sites distinct from the interaction sites of the inner core constituents. Outer core constituents include at least PRRT1, PRRT2, CKAMP44/SHISA9, FRRS1L and NRN1. The proteins of the inner and outer core serve as a platform for other, more peripherally associated AMPAR constituents, including LRRTM4. Alone or in combination, these auxiliary subunits control the gating and pharmacology of the AMPAR complex and profoundly impact their biogenesis and protein processing. In terms of tissue distribution, expressed in the brain (at protein level).

It localises to the cell membrane. The protein localises to the postsynaptic cell membrane. Its function is as follows. May play a role in the development and maintenance of the nervous system. Exhibits strong synaptogenic activity, restricted to excitatory presynaptic differentiation. The sequence is that of Leucine-rich repeat transmembrane neuronal protein 4 (Lrrtm4) from Rattus norvegicus (Rat).